A 220-amino-acid polypeptide reads, in one-letter code: Inner membrane-spanning protein YciB (220 aa).

6 consecutive transmembrane segments (helical) span residues 20-40 (EVPP…FFFA), 57-77 (IGAP…IALA), 86-106 (LPIM…LTLW), 123-143 (LFGG…GYVF), 156-176 (KLTL…EIVW), and 187-207 (FKVW…MPLI).

Belongs to the YciB family.

It is found in the cell inner membrane. Plays a role in cell envelope biogenesis, maintenance of cell envelope integrity and membrane homeostasis. The polypeptide is Inner membrane-spanning protein YciB (Brucella melitensis biotype 2 (strain ATCC 23457)).